The following is an 83-amino-acid chain: Bowman-Birk type proteinase inhibitor C-II (83 aa).

Positions 1–7 are excised as a propeptide; it reads MELNLFK. 7 disulfides stabilise this stretch: Cys-21/Cys-75, Cys-22/Cys-37, Cys-25/Cys-71, Cys-27/Cys-35, Cys-45/Cys-52, Cys-49/Cys-64, and Cys-54/Cys-62.

This sequence belongs to the Bowman-Birk serine protease inhibitor family.

In Glycine max (Soybean), this protein is Bowman-Birk type proteinase inhibitor C-II.